We begin with the raw amino-acid sequence, 183 residues long: UPF0398 protein BLi02355/BL05236 (183 aa).

It belongs to the UPF0398 family.

This is UPF0398 protein BLi02355/BL05236 from Bacillus licheniformis (strain ATCC 14580 / DSM 13 / JCM 2505 / CCUG 7422 / NBRC 12200 / NCIMB 9375 / NCTC 10341 / NRRL NRS-1264 / Gibson 46).